The sequence spans 376 residues: Protein-arginine rhamnosyltransferase (376 aa).

DTDP-beta-L-rhamnose contacts are provided by residues 13-16 (NYGD), Y192, 252-254 (MAQ), and 270-274 (RGEDS). 14–15 (YG) is a binding site for dTDP. D16 functions as the Proton acceptor in the catalytic mechanism. DTDP-binding positions include Y192, 252 to 254 (MAQ), and 270 to 274 (RGEDS). Residue E272 is part of the active site.

It belongs to the glycosyltransferase 104 family.

The catalysed reaction is dTDP-beta-L-rhamnose + L-arginyl-[protein] = N(omega)-(alpha-L-rhamnosyl)-L-arginyl-[protein] + dTDP + H(+). Protein-arginine rhamnosyltransferase that catalyzes the transfer of a single rhamnose to elongation factor P (EF-P) on 'Lys-32', a modification required for EF-P-dependent rescue of polyproline stalled ribosomes. The polypeptide is Protein-arginine rhamnosyltransferase (Pseudomonas aeruginosa (strain ATCC 15692 / DSM 22644 / CIP 104116 / JCM 14847 / LMG 12228 / 1C / PRS 101 / PAO1)).